The primary structure comprises 389 residues: Dual-specificity RNA methyltransferase RlmN (389 aa).

Glu-94 functions as the Proton acceptor in the catalytic mechanism. Residues 134 to 367 (PRVRVTQCIS…CFVRRRRGDD (234 aa)) enclose the Radical SAM core domain. The cysteines at positions 141 and 372 are disulfide-linked. Cys-148, Cys-152, and Cys-155 together coordinate [4Fe-4S] cluster. Residues 197–198 (GE), Ser-229, 253–255 (SLH), and Asn-329 each bind S-adenosyl-L-methionine. Cys-372 serves as the catalytic S-methylcysteine intermediate.

The protein belongs to the radical SAM superfamily. RlmN family. [4Fe-4S] cluster serves as cofactor.

The protein localises to the cytoplasm. It catalyses the reaction adenosine(2503) in 23S rRNA + 2 reduced [2Fe-2S]-[ferredoxin] + 2 S-adenosyl-L-methionine = 2-methyladenosine(2503) in 23S rRNA + 5'-deoxyadenosine + L-methionine + 2 oxidized [2Fe-2S]-[ferredoxin] + S-adenosyl-L-homocysteine. The enzyme catalyses adenosine(37) in tRNA + 2 reduced [2Fe-2S]-[ferredoxin] + 2 S-adenosyl-L-methionine = 2-methyladenosine(37) in tRNA + 5'-deoxyadenosine + L-methionine + 2 oxidized [2Fe-2S]-[ferredoxin] + S-adenosyl-L-homocysteine. Functionally, specifically methylates position 2 of adenine 2503 in 23S rRNA and position 2 of adenine 37 in tRNAs. m2A2503 modification seems to play a crucial role in the proofreading step occurring at the peptidyl transferase center and thus would serve to optimize ribosomal fidelity. The protein is Dual-specificity RNA methyltransferase RlmN of Sorangium cellulosum (strain So ce56) (Polyangium cellulosum (strain So ce56)).